Here is an 83-residue protein sequence, read N- to C-terminus: Neurotoxin LmNaTx34.5 (83 aa).

A signal peptide spans 1–15 (FILVVIALMVIEVKS). The 67-residue stretch at 16-82 (DGYLMVRAGR…IWTYEKNTCS (67 aa)) folds into the LCN-type CS-alpha/beta domain. 4 cysteine pairs are disulfide-bonded: Cys29–Cys81, Cys33–Cys54, Cys40–Cys61, and Cys44–Cys63.

This sequence belongs to the long (4 C-C) scorpion toxin superfamily. Sodium channel inhibitor family. Beta subfamily. As to expression, expressed by the venom gland.

It localises to the secreted. Its function is as follows. Binds voltage-independently at site-4 of sodium channels (Nav) and shift the voltage of activation toward more negative potentials thereby affecting sodium channel activation and promoting spontaneous and repetitive firing. The protein is Neurotoxin LmNaTx34.5 of Lychas mucronatus (Chinese swimming scorpion).